A 175-amino-acid chain; its full sequence is Type II restriction enzyme NgoBV (175 aa).

The catalysed reaction is Endonucleolytic cleavage of DNA to give specific double-stranded fragments with terminal 5'-phosphates.. Functionally, a P subtype restriction enzyme that recognizes the double-stranded sequence 5'-GGNNCC-3'; the cleavage site is unknown. The chain is Type II restriction enzyme NgoBV (ngoBVR) from Neisseria gonorrhoeae.